Reading from the N-terminus, the 266-residue chain is Tryptophan synthase alpha chain (266 aa).

Catalysis depends on proton acceptor residues Glu47 and Asp58.

This sequence belongs to the TrpA family. As to quaternary structure, tetramer of two alpha and two beta chains.

The catalysed reaction is (1S,2R)-1-C-(indol-3-yl)glycerol 3-phosphate + L-serine = D-glyceraldehyde 3-phosphate + L-tryptophan + H2O. Its pathway is amino-acid biosynthesis; L-tryptophan biosynthesis; L-tryptophan from chorismate: step 5/5. The alpha subunit is responsible for the aldol cleavage of indoleglycerol phosphate to indole and glyceraldehyde 3-phosphate. This Leptospira biflexa serovar Patoc (strain Patoc 1 / Ames) protein is Tryptophan synthase alpha chain.